Reading from the N-terminus, the 297-residue chain is Transcription factor MYB1R1 (297 aa).

Residues 44–96 are disordered; it reads DLSQYEHPNANNNNNGGDNNESSKVAQDEGYASADDAVQHQSNSGRERKRGVP. The segment covering 52-63 has biased composition (low complexity); that stretch reads NANNNNNGGDNN. The region spanning 89-145 is the HTH myb-type domain; sequence RERKRGVPWTEEEHKLFLLGLQKVGKGDWRGISRNFVKTRTPTQVASHAQKYFLRRS. A DNA-binding region (H-T-H motif) is located at residues 117 to 141; sequence WRGISRNFVKTRTPTQVASHAQKYF.

It is found in the nucleus. It localises to the cytoplasm. Its subcellular location is the cytosol. Binds selectively to the DNA sequence 5'-[GA]GATAA-3' and may act as a transcription factor involved in the regulation of drought-responsive genes. Enhances stomatal closure in response to abscisic acid (ABA). Confers drought and salt tolerance. This Solanum tuberosum (Potato) protein is Transcription factor MYB1R1.